A 358-amino-acid polypeptide reads, in one-letter code: MRRVSGILAVAAFTISAFAGVIQPVAKDARDSAELDVKLTQVDGTVIKAVVTNNGDKDLNILNLNFFRDTAPVKKVSIYSQGVEVPFGGIRVRHKTSGLSSDVITYLAPGESFEDEFDVAITSDLSQGGPVVLQTQGYVPTTDTGGKTLSGVVRYKSNKLEIDVDGTTAAKSFAAMNQFVKIAKLSSCEGSQGDDTRRALRDCASLSTLAAAQAWAGGPKMLEYFKANDDATRKLVADRFTAVALESSNLTGGSTTYYCRDPYNICTNNIIAYTIPAENLISNCPIYYTEFDNVNRKCHGQDRVTTSLHEFTHASSVFSPGTKDIAYGYNACILLSTRDALNNADTFALFAQSINAGC.

Residues 1–19 form the signal peptide; sequence MRRVSGILAVAAFTISAFA. A propeptide spanning residues 20–182 is cleaved from the precursor; it reads GVIQPVAKDA…FAAMNQFVKI (163 aa). 2 cysteine pairs are disulfide-bonded: C188–C259 and C266–C284. N-linked (GlcNAc...) asparagine glycosylation occurs at N249. H309 is a Zn(2+) binding site. Residue E310 is part of the active site. H313 and D324 together coordinate Zn(2+).

It belongs to the peptidase M35 family. Requires Zn(2+) as cofactor.

Its subcellular location is the secreted. It carries out the reaction Preferential cleavage of bonds with hydrophobic residues in P1'. Also 3-Asn-|-Gln-4 and 8-Gly-|-Ser-9 bonds in insulin B chain.. Secreted metalloproteinase that allows assimilation of proteinaceous substrates. Shows high activities on basic nuclear substrates such as histone and protamine. The polypeptide is Neutral protease 2 homolog PABG_02362 (Paracoccidioides brasiliensis (strain Pb03)).